A 77-amino-acid chain; its full sequence is Sec-independent protein translocase protein TatA (77 aa).

Residues 2-22 (GFGGISIWQLLIILLIVVMLF) traverse the membrane as a helical segment. 2 stretches are compositionally biased toward basic and acidic residues: residues 46–59 (DNGEAEKPAVEEPK) and 66–77 (QARKVEEPAKKD). The disordered stretch occupies residues 46–77 (DNGEAEKPAVEEPKGQTIDAQARKVEEPAKKD).

Belongs to the TatA/E family. As to quaternary structure, the Tat system comprises two distinct complexes: a TatABC complex, containing multiple copies of TatA, TatB and TatC subunits, and a separate TatA complex, containing only TatA subunits. Substrates initially bind to the TatABC complex, which probably triggers association of the separate TatA complex to form the active translocon.

It localises to the cell inner membrane. In terms of biological role, part of the twin-arginine translocation (Tat) system that transports large folded proteins containing a characteristic twin-arginine motif in their signal peptide across membranes. TatA could form the protein-conducting channel of the Tat system. The sequence is that of Sec-independent protein translocase protein TatA from Ectopseudomonas mendocina (strain ymp) (Pseudomonas mendocina).